Reading from the N-terminus, the 345-residue chain is Heat-inducible transcription repressor HrcA (345 aa).

This sequence belongs to the HrcA family.

Functionally, negative regulator of class I heat shock genes (grpE-dnaK-dnaJ and groELS operons). Prevents heat-shock induction of these operons. The protein is Heat-inducible transcription repressor HrcA of Desulfitobacterium hafniense (strain DSM 10664 / DCB-2).